The primary structure comprises 929 residues: SCY1-like protein 2 (929 aa).

One can recognise a Protein kinase domain in the interval 32–327 (FDVGRHIASG…ADQMTKIPFF (296 aa)). The stretch at 443 to 479 (DEIKNSVLPMVYRALEAPSIQIQELCLNIIPTFANLI) is one HEAT repeat. Residues 661–701 (ESENKEDGLQNKHKRASLTLEEKQKLAKEQEQAQKLKSQQP) adopt a coiled-coil conformation. Position 677 is a phosphoserine (Ser677). Positions 684–694 (QKLAKEQEQAQ) are enriched in basic and acidic residues. Disordered regions lie at residues 684-709 (QKLA…VHTP) and 906-929 (NFAQ…DLFG). Low complexity predominate over residues 695-705 (KLKSQQPLKPQ). The necessary for interaction with AP2 complex and clathrin, interaction with clathrin is necessary for its targeting to the TGN and endosomal membranes stretch occupies residues 699–929 (QQPLKPQVHT…ASNDLKDLFG (231 aa)). Thr708 is subject to Phosphothreonine. Polar residues predominate over residues 912–922 (TTMTNSSSASN).

This sequence belongs to the protein kinase superfamily. As to quaternary structure, interacts with clathrin and AP2B1; the interaction mediates the association with the AP-2 complex. Post-translationally, could autophosphorylate in presence of poly-L-lysine.

Its subcellular location is the cytoplasmic vesicle. The protein localises to the clathrin-coated vesicle. The protein resides in the golgi apparatus. It is found in the trans-Golgi network membrane. It localises to the endosome membrane. Component of the AP2-containing clathrin coat that may regulate clathrin-dependent trafficking at plasma membrane, TGN and endosomal system. A possible serine/threonine-protein kinase toward the beta2-subunit of the plasma membrane adapter complex AP2 and other proteins in presence of poly-L-lysine has not been confirmed. By regulating the expression of excitatory receptors at synapses, plays an essential role in neuronal function and signaling and in brain development. This is SCY1-like protein 2 from Homo sapiens (Human).